The sequence spans 96 residues: Antigen H4 (96 aa).

The disordered stretch occupies residues 1-20; the sequence is EFQEEIKEGVEEHKHEDDPE. Asn34 carries N-linked (GlcNAc...) asparagine glycosylation.

This chain is Antigen H4 (H4), found in Toxoplasma gondii.